A 228-amino-acid chain; its full sequence is Max-interacting protein 1 (228 aa).

2 disordered regions span residues 29-76 (GYAS…NELE) and 162-228 (GSTI…SFTS). The segment covering 43 to 56 (QHSKPPRRLSRAQK) has biased composition (basic residues). A compositionally biased stretch (polar residues) spans 57-70 (HSSGSSNTSTANRS). Positions 67–119 (ANRSTHNELEKNRRAHLRLCLERLKVLIPLGPDCTRHTTLGLLNKAKAHIKKL) constitute a bHLH domain. A compositionally biased stretch (acidic residues) spans 173 to 183 (EREEIEVDVES). Positions 216-228 (GYSSASVKLSFTS) are enriched in polar residues.

As to quaternary structure, efficient DNA binding requires dimerization with another bHLH protein. Binds DNA as a heterodimer with MAX. Interacts with SMC3. Interacts with RNF17.

It localises to the nucleus. Transcriptional repressor. MXI1 binds with MAX to form a sequence-specific DNA-binding protein complex which recognizes the core sequence 5'-CAC[GA]TG-3'. MXI1 thus antagonizes MYC transcriptional activity by competing for MAX. This Rattus norvegicus (Rat) protein is Max-interacting protein 1 (Mxi1).